We begin with the raw amino-acid sequence, 515 residues long: MPKERRSRRRPQPIIRWVSLTLTLLALCQPIQTWRCSLSLGNQQWMTTYNQEAKFSISIDQILEAHNQSPFCPRSPRYTLDFVNGYPKIYWPPPQGRRRFGARAMVTYDCEPRCPYVGADHFDCPHWDNASQADQGSFYVNHQILFLHLKQCHGIFTLTWEIWGYDPLITFSLHKIPDPPQPDFPQLNSDWVPSVRSWALLLNQTARAFPDCAICWEPSPPWAPEILVYNKTISGSGPGLALPDAQIFWVNTSLFNTTQGWHHPSQRLLFNVSQGNALLLPPISLVNLSTVSSAPPTRVRRSPVAALTLGLALSVGLTGINVAVSALSHQRLTSLIHVLEQDQQRLITAINQTHYNLLNVASVVAQNRRGLDWLYIRLGFQSLCPTINEPCCFLRIQNDSIIRLGDLQPLSQRVSTDWQWPWNWDLGLTAWVRETIHSVLSLFLLALFLLFLAPCLIKCLTSRLLKLLRQAPHFPEISFPPKPDSDYQALLPSAPEIYSHLSPTKPDYINLRPCP.

A signal peptide spans methionine 1–threonine 33. At tryptophan 34–isoleucine 436 the chain is on the extracellular side. Residues asparagine 129 and asparagine 203 are each glycosylated (N-linked (GlcNAc...) asparagine; by host). A CXXC motif is present at residues cysteine 212–cysteine 215. 3 cysteine pairs are disulfide-bonded: cysteine 212-cysteine 215, cysteine 212-cysteine 392, and cysteine 384-cysteine 391. 5 N-linked (GlcNAc...) asparagine; by host glycosylation sites follow: asparagine 230, asparagine 251, asparagine 256, asparagine 271, and asparagine 287. The tract at residues valine 304–valine 324 is fusion peptide. 2 coiled-coil regions span residues glutamine 330 to isoleucine 376 and asparagine 388 to tryptophan 420. N-linked (GlcNAc...) asparagine; by host glycosylation is present at asparagine 351. The tract at residues alanine 365 to glutamine 381 is immunosuppression. Residues cysteine 384–cysteine 392 carry the CX6CC motif. A glycan (N-linked (GlcNAc...) asparagine; by host) is linked at asparagine 398. Residues histidine 437–isoleucine 457 traverse the membrane as a helical segment. The S-palmitoyl cysteine; by host moiety is linked to residue cysteine 455. Residues lysine 458–proline 515 are Cytoplasmic-facing.

As to quaternary structure, the mature envelope protein (Env) consists of a trimer of SU-TM heterodimers attached by a labile interchain disulfide bond. Post-translationally, specific enzymatic cleavages in vivo yield mature proteins. Envelope glycoproteins are synthesized as an inactive precursor that is N-glycosylated and processed likely by host cell furin or by a furin-like protease in the Golgi to yield the mature SU and TM proteins. The cleavage site between SU and TM requires the minimal sequence [KR]-X-[KR]-R. The CXXC motif is highly conserved across a broad range of retroviral envelope proteins. It is thought to participate in the formation of a labile disulfide bond possibly with the CX6CC motif present in the transmembrane protein. Isomerization of the intersubunit disulfide bond to an SU intrachain disulfide bond is thought to occur upon receptor recognition in order to allow membrane fusion. In terms of processing, the transmembrane protein is palmitoylated.

It localises to the virion membrane. Its subcellular location is the host cell membrane. In terms of biological role, the surface protein (SU) attaches the virus to the host cell by binding to its receptor. This interaction triggers the refolding of the transmembrane protein (TM) and is thought to activate its fusogenic potential by unmasking its fusion peptide. Fusion occurs at the host cell plasma membrane. Functionally, the transmembrane protein (TM) acts as a class I viral fusion protein. Under the current model, the protein has at least 3 conformational states: pre-fusion native state, pre-hairpin intermediate state, and post-fusion hairpin state. During viral and target cell membrane fusion, the coiled coil regions (heptad repeats) assume a trimer-of-hairpins structure, positioning the fusion peptide in close proximity to the C-terminal region of the ectodomain. The formation of this structure appears to drive apposition and subsequent fusion of viral and target cell membranes. Membranes fusion leads to delivery of the nucleocapsid into the cytoplasm. This Bos taurus (Bovine) protein is Envelope glycoprotein (env).